We begin with the raw amino-acid sequence, 240 residues long: Uridylate kinase (240 aa).

Position 14-17 (14-17) interacts with ATP; the sequence is KLSG. Gly56 is a binding site for UMP. Gly57 and Arg61 together coordinate ATP. Residues Asp76 and 137-144 each bind UMP; that span reads TGNPFFTT. The ATP site is built by Thr164, Tyr170, and Asp173.

The protein belongs to the UMP kinase family. In terms of assembly, homohexamer.

Its subcellular location is the cytoplasm. The enzyme catalyses UMP + ATP = UDP + ADP. It participates in pyrimidine metabolism; CTP biosynthesis via de novo pathway; UDP from UMP (UMPK route): step 1/1. Its activity is regulated as follows. Inhibited by UTP. Functionally, catalyzes the reversible phosphorylation of UMP to UDP. The polypeptide is Uridylate kinase (Albidiferax ferrireducens (strain ATCC BAA-621 / DSM 15236 / T118) (Rhodoferax ferrireducens)).